Reading from the N-terminus, the 421-residue chain is Histidine--tRNA ligase (421 aa).

The protein belongs to the class-II aminoacyl-tRNA synthetase family. In terms of assembly, homodimer.

It is found in the cytoplasm. It catalyses the reaction tRNA(His) + L-histidine + ATP = L-histidyl-tRNA(His) + AMP + diphosphate + H(+). The polypeptide is Histidine--tRNA ligase (Natranaerobius thermophilus (strain ATCC BAA-1301 / DSM 18059 / JW/NM-WN-LF)).